We begin with the raw amino-acid sequence, 394 residues long: 4-hydroxybenzoate 3-monooxygenase (NAD(P)H) (394 aa).

Residues Glu32, 42–47, and Gln102 contribute to the FAD site; that span reads TIRAGV. Substrate contacts are provided by residues Tyr203, 214-216, and Tyr224; that span reads STR. Asp288 serves as a coordination point for FAD. Pro295 provides a ligand contact to substrate. 301 to 302 serves as a coordination point for FAD; it reads LN.

It belongs to the aromatic-ring hydroxylase family. FAD is required as a cofactor.

The catalysed reaction is 4-hydroxybenzoate + NADH + O2 + H(+) = 3,4-dihydroxybenzoate + NAD(+) + H2O. The enzyme catalyses 4-hydroxybenzoate + NADPH + O2 + H(+) = 3,4-dihydroxybenzoate + NADP(+) + H2O. Functionally, involved in the degradation of 4-hydroxybenzoate (4HB) via the protocatechuate (PCA) 2,3-cleavage pathway. Catalyzes the conversion of 4HB into 2-hydroxypenta-2,4-dienoate (HPD). It is highly specific for 4-hydroxybenzoate, and is able to utilize both NADH and NADPH as electron donors at approximately equal rates. The sequence is that of 4-hydroxybenzoate 3-monooxygenase (NAD(P)H) (praI) from Paenibacillus sp.